A 391-amino-acid chain; its full sequence is UPF0229 protein CA_C0580 (391 aa).

2 disordered regions span residues methionine 1–aspartate 20 and valine 75–glycine 109. The span at glycine 96 to asparagine 106 shows a compositional bias: gly residues.

The protein belongs to the UPF0229 family.

The protein is UPF0229 protein CA_C0580 of Clostridium acetobutylicum (strain ATCC 824 / DSM 792 / JCM 1419 / IAM 19013 / LMG 5710 / NBRC 13948 / NRRL B-527 / VKM B-1787 / 2291 / W).